We begin with the raw amino-acid sequence, 495 residues long: Cobyric acid synthase (495 aa).

Residues 253 to 446 (KISIAIVYFP…FHGIFDGSAF (194 aa)) enclose the GATase cobBQ-type domain. C334 serves as the catalytic Nucleophile. The active site involves H438.

This sequence belongs to the CobB/CobQ family. CobQ subfamily.

It functions in the pathway cofactor biosynthesis; adenosylcobalamin biosynthesis. In terms of biological role, catalyzes amidations at positions B, D, E, and G on adenosylcobyrinic A,C-diamide. NH(2) groups are provided by glutamine, and one molecule of ATP is hydrogenolyzed for each amidation. The protein is Cobyric acid synthase of Chlorobium phaeobacteroides (strain BS1).